Consider the following 195-residue polypeptide: MSRSESKKNRGGREEVLEQWVAGRRKQEELERDLRKTKKKIKKLEEENPWLGNIKGILGKKDKDGEGAPPAKRARTDRMEVDSGPRKRPLRGGFTDKERQDHRRRKALENKKKQLGAGGKNLSREEEEELRRLTEEDERRERRVAGPPPGGVNPLEGGSRGAPGGGFVPNMQGVPESPFTRTGEGLDVRGDRGFP.

Serine 2 carries the post-translational modification Phosphoserine; by host CK2. The segment at 12–60 (GREEVLEQWVAGRRKQEELERDLRKTKKKIKKLEEENPWLGNIKGILGK) is dimerization. Position 13 is an omega-N-methylated arginine; by host PRMT1 (arginine 13). The 176-residue stretch at 20-195 (WVAGRRKQEE…LDVRGDRGFP (176 aa)) folds into the HDAg domain. The interval 38-195 (KKKIKKLEEE…LDVRGDRGFP (158 aa)) is disordered. A Nuclear localization signal motif is present at residues 66-75 (EGAPPAKRAR). The residue at position 72 (lysine 72) is an N6-acetyllysine; by host. Basic and acidic residues-rich tracts occupy residues 74–85 (ARTDRMEVDSGP) and 94–112 (FTDKERQDHRRRKALENKK). Positions 97–107 (KERQDHRRRKA) are RNA-binding. Serine 123 bears the Phosphoserine; by host mark. Residues 129–144 (ELRRLTEEDERRERRV) are compositionally biased toward basic and acidic residues. The segment at 130–195 (LRRLTEEDER…LDVRGDRGFP (66 aa)) is RNAPII-binding. Residues 136–146 (EDERRERRVAG) are RNA-binding. Residues 158 to 167 (GSRGAPGGGF) are compositionally biased toward gly residues. A Phosphoserine; by host MAPK1 and MAPK3 modification is found at serine 177. Phosphothreonine; by host is present on threonine 182. The span at 184-195 (EGLDVRGDRGFP) shows a compositional bias: basic and acidic residues.

Belongs to the hepatitis delta antigen family. As to quaternary structure, homodimer. Homooctamer. Interacts with host RNA polymerase II complex, and with host NPM1. Phosphorylated at serines and threonines by host MAPK1/3, PKR, and CK2. In terms of processing, acetylation modulates nuclear localization. Neo-synthesized genomic RNA migrates from the nucleus to the cytoplasm, where they interact with S-HDAg, which once acetylated redirect both partners to the nucleus. Post-translationally, methylation plays a role in viral genome replication.

Its subcellular location is the virion. It localises to the host nucleus. Functionally, promotes both transcription and replication of genomic RNA. Following virus entry into host cell, provides nuclear import of HDV RNPs thanks to its nuclear localization signal. May interact with host RNA polymerase II thereby changing its template requirement from DNA to RNA. RNA pol II complex would then acts as an RNA-directed RNA polymerase, and transcribe and replicate HDV genome. The protein is Small delta antigen of Hepatitis delta virus genotype I (isolate Nauru) (HDV).